We begin with the raw amino-acid sequence, 269 residues long: Chymotrypsin-like elastase family member 2B (269 aa).

The N-terminal stretch at Met-1–Ser-16 is a signal peptide. A propeptide spans Cys-17 to Arg-28 (activation peptide). The region spanning Met-29–Ala-267 is the Peptidase S1 domain. A disulfide bridge links Cys-58 with Cys-74. Active-site charge relay system residues include His-73 and Asp-121. 3 disulfide bridges follow: Cys-155-Cys-222, Cys-186-Cys-202, and Cys-212-Cys-243. Ser-216 acts as the Charge relay system in catalysis.

This sequence belongs to the peptidase S1 family. Elastase subfamily. In terms of tissue distribution, pancreas.

The protein resides in the secreted. It catalyses the reaction Preferential cleavage: Leu-|-Xaa, Met-|-Xaa and Phe-|-Xaa. Hydrolyzes elastin.. In terms of biological role, acts upon elastin. This Homo sapiens (Human) protein is Chymotrypsin-like elastase family member 2B (CELA2B).